A 331-amino-acid chain; its full sequence is Type 2 lactosamine alpha-2,3-sialyltransferase (331 aa).

Residues 1-4 (MRGY) lie on the Cytoplasmic side of the membrane. The helical; Signal-anchor for type II membrane protein transmembrane segment at 5-25 (LVAIFLSAVFLYYVLHCILWG) threads the bilayer. At 26-331 (TNVYWAAPVE…KNLVINLTQD (306 aa)) the chain is on the lumenal side. Residues asparagine 129, asparagine 181, asparagine 282, asparagine 295, asparagine 308, and asparagine 327 are each glycosylated (N-linked (GlcNAc...) asparagine).

This sequence belongs to the glycosyltransferase 29 family.

It is found in the golgi apparatus membrane. It carries out the reaction a neolactoside nLc4Cer(d18:1(4E)) + CMP-N-acetyl-beta-neuraminate = a neolactoside IV(3)-alpha-NeuAc-nLc4Cer(d18:1(4E)) + CMP + H(+). The enzyme catalyses a beta-D-galactosyl-(1-&gt;4)-N-acetyl-beta-D-glucosaminyl derivative + CMP-N-acetyl-beta-neuraminate = an N-acetyl-alpha-neuraminyl-(2-&gt;3)-beta-D-galactosyl-(1-&gt;4)-N-acetyl-beta-D-glucosaminyl derivative + CMP + H(+). It catalyses the reaction a neolactoside nLc6Cer(d18:1(4E)) + CMP-N-acetyl-beta-neuraminate = a neolactoside VI(3)-alpha-NeuNAc-nLc6Cer(d18:1(4E)) + CMP + H(+). Functionally, transfers the sialyl residue from CMP-N-acetyl-beta-neuraminate to the terminal galactose residue on sugar chains of glycoproteins and glycolipids. It's alpha-2,3-sialyltransferase activity is specific toward type II glycan chains (Galbeta1-4GlcNAc) on glycoproteins and glycolipids such as neolactosides nLc4Cer and nLc6Cer, whose sialyl-products serve as precursors for the Lewis X antigen. Critically involved in the synthesis of functional selectin ligands needed for neutrophil recruitment during inflammation and lymphocyte homing to the lymph nodes. The polypeptide is Type 2 lactosamine alpha-2,3-sialyltransferase (ST3GAL6) (Pongo abelii (Sumatran orangutan)).